A 357-amino-acid polypeptide reads, in one-letter code: DNA replication and repair protein RecF (357 aa).

31 to 38 (GQNGAGKT) contacts ATP.

The protein belongs to the RecF family.

It is found in the cytoplasm. Its function is as follows. The RecF protein is involved in DNA metabolism; it is required for DNA replication and normal SOS inducibility. RecF binds preferentially to single-stranded, linear DNA. It also seems to bind ATP. In Coxiella burnetii (strain CbuK_Q154) (Coxiella burnetii (strain Q154)), this protein is DNA replication and repair protein RecF.